A 278-amino-acid polypeptide reads, in one-letter code: Undecaprenyl-diphosphatase (278 aa).

Transmembrane regions (helical) follow at residues 44 to 64 (FLEM…MTIY), 84 to 104 (WQLW…AVPL), 112 to 132 (FNFM…FIWI), 187 to 207 (SVAA…YSGL), 224 to 244 (VWIL…VIRF), and 254 to 274 (FTVF…YAFI).

This sequence belongs to the UppP family.

The protein resides in the cell membrane. The catalysed reaction is di-trans,octa-cis-undecaprenyl diphosphate + H2O = di-trans,octa-cis-undecaprenyl phosphate + phosphate + H(+). Its function is as follows. Catalyzes the dephosphorylation of undecaprenyl diphosphate (UPP). Confers resistance to bacitracin. The chain is Undecaprenyl-diphosphatase from Streptococcus suis (strain 98HAH33).